We begin with the raw amino-acid sequence, 145 residues long: MDMNFDLYMNGVVEQARNEIESAGYEQLTTAEDVDKVLKQDGTTLVMINSVCGCAGGIARPAASHALHYDVLPDRLVTVFAGQDKEATQRAREYFEGYAPSSPSFALVKDGKITEMIERHQIEGHDVMNVINQLQTLFNKYCEER.

It belongs to the bacilliredoxin family.

This Staphylococcus aureus (strain NCTC 8325 / PS 47) protein is Bacilliredoxin SAOUHSC_01610.